The following is a 692-amino-acid chain: Elongation factor G (692 aa).

A tr-type G domain is found at 8–282 (EKTRNIGIMA…AIVDFLPAPT (275 aa)). Residues 17-24 (AHIDAGKT), 81-85 (DTPGH), and 135-138 (NKMD) contribute to the GTP site.

The protein belongs to the TRAFAC class translation factor GTPase superfamily. Classic translation factor GTPase family. EF-G/EF-2 subfamily.

The protein resides in the cytoplasm. Functionally, catalyzes the GTP-dependent ribosomal translocation step during translation elongation. During this step, the ribosome changes from the pre-translocational (PRE) to the post-translocational (POST) state as the newly formed A-site-bound peptidyl-tRNA and P-site-bound deacylated tRNA move to the P and E sites, respectively. Catalyzes the coordinated movement of the two tRNA molecules, the mRNA and conformational changes in the ribosome. This Moorella thermoacetica (strain ATCC 39073 / JCM 9320) protein is Elongation factor G.